The chain runs to 112 residues: Ig kappa chain V-II region 2S1.3 (112 aa).

Residues 1–23 (DIVMTQAAFSNPVTLGTSASFSC) are framework-1. Residues Cys23 and Cys93 are joined by a disulfide bond. Residues 24 to 39 (RSSKSLQQSKGITYLY) are complementarity-determining-1. Residues 40 to 54 (WYLQKPGQSPQLLIY) form a framework-2 region. Residues 55–61 (QMSNLAS) form a complementarity-determining-2 region. The tract at residues 62-93 (GVPDRFSGSGSGTDFTLRISRVEAEDVGVYYC) is framework-3. The tract at residues 94 to 102 (ANLQELPYT) is complementarity-determining-3. A framework-4 region spans residues 103–112 (FGGGTKLEIK).

The polypeptide is Ig kappa chain V-II region 2S1.3 (Mus musculus (Mouse)).